The chain runs to 208 residues: Cytochrome c biogenesis ATP-binding export protein CcmA (208 aa).

An ABC transporter domain is found at 3–206; that stretch reads LSGKDLAAHR…LEKFVPSQER (204 aa). 35 to 42 provides a ligand contact to ATP; the sequence is GPNGIGKS.

This sequence belongs to the ABC transporter superfamily. CcmA exporter (TC 3.A.1.107) family. As to quaternary structure, the complex is composed of two ATP-binding proteins (CcmA) and two transmembrane proteins (CcmB).

Its subcellular location is the cell inner membrane. The catalysed reaction is heme b(in) + ATP + H2O = heme b(out) + ADP + phosphate + H(+). In terms of biological role, part of the ABC transporter complex CcmAB involved in the biogenesis of c-type cytochromes; once thought to export heme, this seems not to be the case, but its exact role is uncertain. Responsible for energy coupling to the transport system. The protein is Cytochrome c biogenesis ATP-binding export protein CcmA of Bartonella quintana (strain Toulouse) (Rochalimaea quintana).